A 180-amino-acid polypeptide reads, in one-letter code: MFLHPSYRNNLFSTKCGTCDLDAKVEFRSGTVTFYRNKNGSIYNFCSFECMDKFNRTKICWFCSYHSDLVSCESGFMICTSDTYWKYSCRDKYYIRLKHDLILEDDPLTDDDYDKISESDSLPDEYKEYVVKHDSDNSDNDSDNSDNDSNNSDNDSNNSDSDSDNSNDPNNFDNPDDNPK.

The segment covering 114-136 has biased composition (basic and acidic residues); sequence DKISESDSLPDEYKEYVVKHDSD. The interval 114 to 180 is disordered; sequence DKISESDSLP…NFDNPDDNPK (67 aa). The segment covering 137-146 has biased composition (acidic residues); the sequence is NSDNDSDNSD. Over residues 147–173 the composition is skewed to low complexity; that stretch reads NDSNNSDNDSNNSDSDSDNSNDPNNFD.

This is an uncharacterized protein from Acanthamoeba polyphaga (Amoeba).